Here is a 599-residue protein sequence, read N- to C-terminus: Pentatricopeptide repeat-containing protein At3g62540, mitochondrial (599 aa).

A mitochondrion-targeting transit peptide spans methionine 1–valine 99. PPR repeat units lie at residues alanine 194 to threonine 228, glutamate 230 to isoleucine 262, glycine 263 to arginine 293, asparagine 297 to proline 331, aspartate 332 to proline 366, asparagine 367 to proline 401, aspartate 402 to proline 436, aspartate 437 to proline 471, serine 472 to proline 506, and aspartate 507 to threonine 541.

It belongs to the PPR family. P subfamily.

The protein localises to the mitochondrion. This chain is Pentatricopeptide repeat-containing protein At3g62540, mitochondrial, found in Arabidopsis thaliana (Mouse-ear cress).